A 443-amino-acid chain; its full sequence is Mitochondrial enolase superfamily member 1 (443 aa).

Substrate-binding positions include 24–26 (GSD) and Tyr-34. Position 148 is a phosphoserine (Ser-148). Lys-220 lines the substrate pocket. Lys-222 functions as the Proton donor/acceptor in the catalytic mechanism. Asp-250 provides a ligand contact to Mg(2+). Residues Asn-252, Glu-276, Glu-305, 355-357 (HAG), and Glu-386 each bind substrate. Mg(2+) contacts are provided by Glu-276 and Glu-305. The active site involves His-355.

This sequence belongs to the mandelate racemase/muconate lactonizing enzyme family. ENOSF1 subfamily. It depends on Mg(2+) as a cofactor. Could be sumoylated.

The protein localises to the mitochondrion. It carries out the reaction L-fuconate = 2-dehydro-3-deoxy-L-fuconate + H2O. Its function is as follows. Plays a role in the catabolism of L-fucose, a sugar that is part of the carbohydrates that are attached to cellular glycoproteins. Catalyzes the dehydration of L-fuconate to 2-keto-3-deoxy-L-fuconate by the abstraction of the 2-proton to generate an enediolate intermediate that is stabilized by the magnesium ion. May down-regulate thymidylate synthase activity, possibly already at the RNA level, by promoting the degradation of TYMS mRNA via an antisense RNA-based mechanism. The sequence is that of Mitochondrial enolase superfamily member 1 (ENOSF1) from Pongo abelii (Sumatran orangutan).